Here is a 465-residue protein sequence, read N- to C-terminus: Mitochondrial distribution and morphology protein 10 (465 aa).

Belongs to the MDM10 family. In terms of assembly, component of the ER-mitochondria encounter structure (ERMES) or MDM complex, composed of MMM1, MDM10, MDM12 and MDM34. Associates with the mitochondrial outer membrane sorting assembly machinery SAM(core) complex.

The protein localises to the mitochondrion outer membrane. In terms of biological role, component of the ERMES/MDM complex, which serves as a molecular tether to connect the endoplasmic reticulum and mitochondria. Components of this complex are involved in the control of mitochondrial shape and protein biogenesis and may function in phospholipid exchange. MDM10 is involved in the late assembly steps of the general translocase of the mitochondrial outer membrane (TOM complex). Functions in the TOM40-specific route of the assembly of outer membrane beta-barrel proteins, including the association of TOM40 with the receptor TOM22 and small TOM proteins. Can associate with the SAM(core) complex as well as the MDM12-MMM1 complex, both involved in late steps of the major beta-barrel assembly pathway, that is responsible for biogenesis of all outer membrane beta-barrel proteins. May act as a switch that shuttles between both complexes and channels precursor proteins into the TOM40-specific pathway. Plays a role in mitochondrial morphology and in the inheritance of mitochondria. The sequence is that of Mitochondrial distribution and morphology protein 10 from Eremothecium gossypii (strain ATCC 10895 / CBS 109.51 / FGSC 9923 / NRRL Y-1056) (Yeast).